The primary structure comprises 445 residues: Phosphoglucosamine mutase (445 aa).

Residue Ser102 is the Phosphoserine intermediate of the active site. Residues Ser102, Asp241, Asp243, and Asp245 each contribute to the Mg(2+) site. Position 102 is a phosphoserine (Ser102).

It belongs to the phosphohexose mutase family. Requires Mg(2+) as cofactor. Post-translationally, activated by phosphorylation.

It carries out the reaction alpha-D-glucosamine 1-phosphate = D-glucosamine 6-phosphate. Catalyzes the conversion of glucosamine-6-phosphate to glucosamine-1-phosphate. This chain is Phosphoglucosamine mutase, found in Salmonella choleraesuis (strain SC-B67).